The sequence spans 413 residues: MEFSERKRSRKSQSFKLVSRDYHHEVYKIPEFSNDVNGEAKETQPIFLGDESMEIKKQITGMRRLLNDSTGRIYQRVGKEGEKLKEEPQDLDLVWPPRLNSSAEAPQSLHPSSRGVWNELPPQSGQFSGQYGTRSRTFQSQPHPTTSSNGELPVVNSSAGSNCCTCNCQSTLQAILQELKTMRKLMQIQAVGTQNRQQPPISLICSQRTAVSRKRNKKKKVPPKTVEPLTVKQKPSGSEMEKKSVVASELSALQAAEHTSPEESRVLGFGIVLESPSSDPEVQLAEGFDVFMPKSQLDSILSNYTRSGSLLFRKLVCAFFDDKTLANSLPNGKRKRGLNDNRKGLDQNIVGAIKVFTEKYCTANHVDKLPGPRDWVQILQDQIKLARRRLKRGSEIADSDERLDGIALPPTVV.

Glycyl lysine isopeptide (Lys-Gly) (interchain with G-Cter in SUMO2) cross-links involve residues K16, K56, and K85. Basic and acidic residues predominate over residues 78–88 (GKEGEKLKEEP). Disordered stretches follow at residues 78-153 (GKEG…GELP) and 208-243 (RTAV…MEKK). Composition is skewed to polar residues over residues 99-111 (LNSS…SLHP) and 121-153 (PPQS…GELP). Residues 211–222 (VSRKRNKKKKVP) are compositionally biased toward basic residues. Residues 223 to 232 (PKTVEPLTVK) are compositionally biased toward low complexity. A Glycyl lysine isopeptide (Lys-Gly) (interchain with G-Cter in SUMO2) cross-link involves residue K243. The region spanning 287-392 (GFDVFMPKSQ…IKLARRRLKR (106 aa)) is the BEN domain. At T324 the chain carries Phosphothreonine. Phosphoserine is present on S328.

This Homo sapiens (Human) protein is BEN domain-containing protein 7 (BEND7).